Here is a 271-residue protein sequence, read N- to C-terminus: Ribosomal RNA small subunit methyltransferase A (271 aa).

S-adenosyl-L-methionine contacts are provided by His-11, Leu-13, Gly-38, Glu-58, Asp-86, and Asn-101.

It belongs to the class I-like SAM-binding methyltransferase superfamily. rRNA adenine N(6)-methyltransferase family. RsmA subfamily.

The protein localises to the cytoplasm. It catalyses the reaction adenosine(1518)/adenosine(1519) in 16S rRNA + 4 S-adenosyl-L-methionine = N(6)-dimethyladenosine(1518)/N(6)-dimethyladenosine(1519) in 16S rRNA + 4 S-adenosyl-L-homocysteine + 4 H(+). In terms of biological role, specifically dimethylates two adjacent adenosines (A1518 and A1519) in the loop of a conserved hairpin near the 3'-end of 16S rRNA in the 30S particle. May play a critical role in biogenesis of 30S subunits. This Helicobacter acinonychis (strain Sheeba) protein is Ribosomal RNA small subunit methyltransferase A.